A 464-amino-acid polypeptide reads, in one-letter code: Argininosuccinate lyase (464 aa).

It belongs to the lyase 1 family. Argininosuccinate lyase subfamily.

Its subcellular location is the cytoplasm. The catalysed reaction is 2-(N(omega)-L-arginino)succinate = fumarate + L-arginine. Its pathway is amino-acid biosynthesis; L-arginine biosynthesis; L-arginine from L-ornithine and carbamoyl phosphate: step 3/3. The sequence is that of Argininosuccinate lyase from Azotobacter vinelandii (strain DJ / ATCC BAA-1303).